Reading from the N-terminus, the 316-residue chain is Apolipoprotein E (316 aa).

A signal peptide spans 1–18; it reads MKVLWAALVVTLLAGCGA. Tandem repeats lie at residues 83-104, 105-126, 127-148, 149-170, 171-192, 193-214, 215-232, and 233-254. The 8 X 22 AA approximate tandem repeats stretch occupies residues 83-254; the sequence is ALMDDTMKEV…RLDEVREQVQ (172 aa). An LDL and other lipoprotein receptors binding region spans residues 161-171; that stretch reads HLRKLRKRLLR. 165–168 is a binding site for heparin; sequence LRKR. The tract at residues 213 to 289 is lipid-binding and lipoprotein association; that stretch reads HTLVSKPLQE…SWFEPLVQDM (77 aa). Residue 228–235 participates in heparin binding; sequence AQRLRGRL. The interval 265–316 is homooligomerization; the sequence is NQVRLQAEAFQGRLKSWFEPLVQDMQQKWAELVEKVQLAVGAVPTSVPSEKQ. Positions 277–289 are specificity for association with VLDL; sequence RLKSWFEPLVQDM.

Belongs to the apolipoprotein A1/A4/E family. As to quaternary structure, homotetramer. May interact with ABCA1; functionally associated with ABCA1 in the biogenesis of HDLs. May interact with APP/A4 amyloid-beta peptide; the interaction is extremely stable in vitro but its physiological significance is unclear. May interact with MAPT. May interact with MAP2. In the cerebrospinal fluid, interacts with secreted SORL1. Interacts with PMEL; this allows the loading of PMEL luminal fragment on ILVs to induce fibril nucleation. In terms of processing, APOE exists as multiple glycosylated and sialylated glycoforms within cells and in plasma. The extent of glycosylation and sialylation are tissue and context specific. Post-translationally, glycated in plasma VLDL. Phosphorylated by FAM20C in the extracellular medium.

It is found in the secreted. It localises to the extracellular space. Its subcellular location is the extracellular matrix. The protein localises to the extracellular vesicle. The protein resides in the endosome. It is found in the multivesicular body. APOE is an apolipoprotein, a protein associating with lipid particles, that mainly functions in lipoprotein-mediated lipid transport between organs via the plasma and interstitial fluids. APOE is a core component of plasma lipoproteins and is involved in their production, conversion and clearance. Apolipoproteins are amphipathic molecules that interact both with lipids of the lipoprotein particle core and the aqueous environment of the plasma. As such, APOE associates with chylomicrons, chylomicron remnants, very low density lipoproteins (VLDL) and intermediate density lipoproteins (IDL) but shows a preferential binding to high-density lipoproteins (HDL). It also binds a wide range of cellular receptors including the LDL receptor/LDLR and the very low-density lipoprotein receptor/VLDLR that mediate the cellular uptake of the APOE-containing lipoprotein particles. Finally, APOE also has a heparin-binding activity and binds heparan-sulfate proteoglycans on the surface of cells, a property that supports the capture and the receptor-mediated uptake of APOE-containing lipoproteins by cells. The sequence is that of Apolipoprotein E (APOE) from Diceros bicornis (Black rhinoceros).